The chain runs to 122 residues: Large ribosomal subunit protein uL14 (122 aa).

The protein belongs to the universal ribosomal protein uL14 family. Part of the 50S ribosomal subunit. Forms a cluster with proteins L3 and L19. In the 70S ribosome, L14 and L19 interact and together make contacts with the 16S rRNA in bridges B5 and B8.

Its function is as follows. Binds to 23S rRNA. Forms part of two intersubunit bridges in the 70S ribosome. The polypeptide is Large ribosomal subunit protein uL14 (Verminephrobacter eiseniae (strain EF01-2)).